Consider the following 160-residue polypeptide: ATP synthase subunit b (160 aa).

A helical membrane pass occupies residues 13 to 33; sequence VNLAIVIGVLVWFLRGFLGGI.

Belongs to the ATPase B chain family. F-type ATPases have 2 components, F(1) - the catalytic core - and F(0) - the membrane proton channel. F(1) has five subunits: alpha(3), beta(3), gamma(1), delta(1), epsilon(1). F(0) has four main subunits: a(1), b(1), b'(1) and c(10-14). The alpha and beta chains form an alternating ring which encloses part of the gamma chain. F(1) is attached to F(0) by a central stalk formed by the gamma and epsilon chains, while a peripheral stalk is formed by the delta, b and b' chains.

The protein resides in the cellular thylakoid membrane. In terms of biological role, f(1)F(0) ATP synthase produces ATP from ADP in the presence of a proton or sodium gradient. F-type ATPases consist of two structural domains, F(1) containing the extramembraneous catalytic core and F(0) containing the membrane proton channel, linked together by a central stalk and a peripheral stalk. During catalysis, ATP synthesis in the catalytic domain of F(1) is coupled via a rotary mechanism of the central stalk subunits to proton translocation. Functionally, component of the F(0) channel, it forms part of the peripheral stalk, linking F(1) to F(0). The protein is ATP synthase subunit b of Parasynechococcus marenigrum (strain WH8102).